Consider the following 119-residue polypeptide: MANTKRELFLKRRLRVRNKLKASANGRLRLSVHRSSKNISAQLIDDANGVTLAAASTLEKGLGFFGKNNVEASAAVGRTIAERAKAAGIEECYFDRGGFLFHGKIKALADAAREGGLKF.

The protein belongs to the universal ribosomal protein uL18 family. Part of the 50S ribosomal subunit; part of the 5S rRNA/L5/L18/L25 subcomplex. Contacts the 5S and 23S rRNAs.

In terms of biological role, this is one of the proteins that bind and probably mediate the attachment of the 5S RNA into the large ribosomal subunit, where it forms part of the central protuberance. In Cereibacter sphaeroides (strain ATCC 17025 / ATH 2.4.3) (Rhodobacter sphaeroides), this protein is Large ribosomal subunit protein uL18.